The sequence spans 180 residues: Cell wall / vacuolar inhibitor of fructosidase 2 (180 aa).

Residues 1–23 (MASSLIFLLLVTLTFSASTLISA) form the signal peptide. Asn26 carries N-linked (GlcNAc...) asparagine glycosylation. A disulfide bridge connects residues Cys35 and Cys44. 2 N-linked (GlcNAc...) asparagine glycosylation sites follow: Asn73 and Asn84. An intrachain disulfide couples Cys101 to Cys141.

Belongs to the PMEI family. Mostly expressed at low levels in seedlings, stems, leaves and flowers (in all organs), and, to a lower extent, in roots and siliques.

It localises to the vacuole. In terms of biological role, inhibits fructosidases from both cell wall (cell wall invertase CWI) and vacuoles (vacuolar invertase VI). The sequence is that of Cell wall / vacuolar inhibitor of fructosidase 2 (C/VIF2) from Arabidopsis thaliana (Mouse-ear cress).